We begin with the raw amino-acid sequence, 175 residues long: B9 domain-containing protein 2 (175 aa).

A C2 B9-type domain is found at 2 to 118 (AEVHVIGQII…DCPTWRPLGS (117 aa)).

The protein belongs to the B9D family. Part of the tectonic-like complex (also named B9 complex). Interacts with TUBG1. In terms of tissue distribution, highest expression in thymus and skeletal muscle. Also expressed in spleen, kidney, lung, heart, microglia and liver. Detected in brain (at protein level).

It localises to the cytoplasm. Its subcellular location is the cytoskeleton. The protein localises to the cilium basal body. The protein resides in the cilium axoneme. It is found in the nucleus. Component of the tectonic-like complex, a complex localized at the transition zone of primary cilia and acting as a barrier that prevents diffusion of transmembrane proteins between the cilia and plasma membranes. The sequence is that of B9 domain-containing protein 2 (B9d2) from Mus musculus (Mouse).